We begin with the raw amino-acid sequence, 872 residues long: Rho guanine nucleotide exchange factor scd1 (872 aa).

Residues 1 to 29 (MAYFQDRKTSSRSLPSYINHSTQNLVGPR) form a disordered region. A compositionally biased stretch (polar residues) spans 11–25 (SRSLPSYINHSTQNL). Residues 82 to 198 (DSIHREALNS…TIELLLKKYE (117 aa)) form the Calponin-homology (CH) domain. The 175-residue stretch at 228–402 (SGRRVTAELY…VRVANQVNET (175 aa)) folds into the DH domain. One can recognise a PH domain in the interval 426-547 (SLQYFGQLLV…WMSVLNRLLW (122 aa)). Disordered regions lie at residues 553 to 667 (SPKD…STAS) and 743 to 765 (MKSDGSLLPSTKHTSLSSSSTST). The segment covering 560-584 (AASTPANPVYNRSSSQTSKGYNSSD) has biased composition (polar residues). Serine 583 is modified (phosphoserine). The segment covering 599-616 (SPTSISSPSSKSSPFTKT) has biased composition (low complexity). The span at 617-633 (TSKDTKSATTTDERPSD) shows a compositional bias: basic and acidic residues. Low complexity-rich tracts occupy residues 645–667 (TSSLRTSQTTSTIVSNDSSSTAS) and 748–765 (SLLPSTKHTSLSSSSTST). One can recognise a PB1 domain in the interval 772–859 (TTNVKIRLRL…FELMDPVHNK (88 aa)).

Scd1, scd2, cdc42, and ras1, in its GTP-bound state, act cooperatively to form a protein complex. Interacts with moe1 and cdc42.

The protein resides in the nucleus. Its subcellular location is the cytoplasm. Its function is as follows. Required for mating and morphogenesis. May contain a cryptic binding site for cdc42 that is enhanced by binding Ras. Interacts directly with scd2. Promotes the exchange of cdc42-bound GDP by GTP. Involved in septation and stimulates the elongation of conjugation tubes. The sequence is that of Rho guanine nucleotide exchange factor scd1 (scd1) from Schizosaccharomyces pombe (strain 972 / ATCC 24843) (Fission yeast).